The sequence spans 207 residues: Na(+)-translocating ferredoxin:NAD(+) oxidoreductase complex subunit G (207 aa).

Residues 18 to 38 form a helical membrane-spanning segment; the sequence is GLILFVISAVAACALALTNYV. T185 is subject to FMN phosphoryl threonine.

The protein belongs to the RnfG family. In terms of assembly, the complex is composed of six subunits: RnfA, RnfB, RnfC, RnfD, RnfE and RnfG. FMN serves as cofactor.

The protein localises to the cell membrane. The catalysed reaction is 2 reduced [2Fe-2S]-[ferredoxin] + Na(+)(in) + NAD(+) + H(+) = 2 oxidized [2Fe-2S]-[ferredoxin] + Na(+)(out) + NADH. Functionally, part of a membrane-bound complex that couples electron transfer with translocation of ions across the membrane. Couples electron transfer from reduced ferredoxin to NAD(+) with electrogenic movement of Na(+) out of the cell. Involved in caffeate respiration. The sequence is that of Na(+)-translocating ferredoxin:NAD(+) oxidoreductase complex subunit G from Acetobacterium woodii (strain ATCC 29683 / DSM 1030 / JCM 2381 / KCTC 1655 / WB1).